The chain runs to 331 residues: Hyaluronidase (331 aa).

2 disulfides stabilise this stretch: C19–C308 and C185–C197. N79 carries N-linked (GlcNAc...) asparagine glycosylation. E109 serves as the catalytic Proton donor. An N-linked (GlcNAc...) asparagine glycan is attached at N325.

The protein belongs to the glycosyl hydrolase 56 family. Expressed by the venom gland.

The protein localises to the secreted. The catalysed reaction is Random hydrolysis of (1-&gt;4)-linkages between N-acetyl-beta-D-glucosamine and D-glucuronate residues in hyaluronate.. In terms of biological role, hydrolyzes high molecular weight hyaluronic acid to produce small oligosaccharides. The sequence is that of Hyaluronidase from Dolichovespula maculata (Bald-faced hornet).